The chain runs to 377 residues: MKRVINSCIAVLLGVAVMSAVIVLCSENPSVSLAAFFLKPFSTRGYIRALFHKAGLFVCMALGASCALKTGMINLGGDGQIYAAGFVTALLLREYWGVGFLLQWSVALLCALSVAGILACVSGILKAWLATSEMITSFLLSTACVPLIDALIITVTRDPAGNLLATAPVHSHFILQQQTSLFGVPAVLTYASLVALAVGCFFSYTRVGYQFRICGKAPEFGRFVGFPVWATYVWGMVLSGALFGLTGFFSVVGLFGTCYVGFSVGMGYAALAHALIAHAHITVLVPLAFFFAWMETASEAAVLGAHLTVNVVLFLQAAIFLLISAQWSAPWNAVRRGARRVYRFLVTVFCFRGEKHRTRRRHALSVHDTHHRRSRWE.

A run of 10 helical transmembrane segments spans residues 4–24, 49–69, 72–92, 98–118, 135–155, 182–202, 223–245, 249–268, 274–294, and 303–323; these read VINS…VIVL, ALFH…CALK, MINL…ALLL, VGFL…AGIL, ITSF…IITV, FGVP…GCFF, FVGF…LFGL, FSVV…GMGY, ALIA…FAWM, and LGAH…FLLI.

The protein belongs to the binding-protein-dependent transport system permease family. As to quaternary structure, the complex is probably composed of two ATP-binding proteins (RfuB), two transmembrane proteins (RfuC and RfuD) and a solute-binding protein (RfuA).

The protein localises to the cell inner membrane. Functionally, probably part of the ABC transporter complex RfuABCD involved in riboflavin import. Probably responsible for the translocation of the substrate across the membrane. In Treponema pallidum (strain Nichols), this protein is Probable riboflavin import permease protein RfuC.